A 564-amino-acid chain; its full sequence is 4-hydroxy-7-methoxy-3-oxo-3,4-dihydro-2H-1,4-benzoxazin-2-yl glucoside beta-D-glucosidase 1d, chloroplastic (564 aa).

A chloroplast-targeting transit peptide spans M1–A50. Residues Q92, H194, and N239–E240 each bind a beta-D-glucoside. The active-site Proton donor is the E240. The cysteines at positions 259 and 265 are disulfide-linked. A beta-D-glucoside-binding positions include Y383, E456, W504, E511 to W512, and F520. The active-site Nucleophile is the E456.

This sequence belongs to the glycosyl hydrolase 1 family. In terms of assembly, homo- and heterohexamers. As to expression, expressed in young seedlings early after germination.

It is found in the plastid. It localises to the chloroplast. The catalysed reaction is Hydrolysis of terminal, non-reducing beta-D-glucosyl residues with release of beta-D-glucose.. The enzyme catalyses DIMBOA beta-D-glucoside + H2O = DIMBOA + D-glucose. It carries out the reaction DIBOA beta-D-glucoside + H2O = DIBOA + D-glucose. In terms of biological role, acts in defense of young plant parts against pests via the production of hydroxamic acids from hydroxamic acid glucosides. Enzymatic activity is highly correlated with plant growth. The preferred substrate is DIMBOA-beta-D-glucoside. The polypeptide is 4-hydroxy-7-methoxy-3-oxo-3,4-dihydro-2H-1,4-benzoxazin-2-yl glucoside beta-D-glucosidase 1d, chloroplastic (GLU1D) (Triticum aestivum (Wheat)).